The chain runs to 178 residues: Ribosome maturation factor RimM (178 aa).

In terms of domain architecture, PRC barrel spans 100–178 (TDGEYYWYQL…EMKVEWDADF (79 aa)).

Belongs to the RimM family. In terms of assembly, binds ribosomal protein uS19.

It is found in the cytoplasm. Its function is as follows. An accessory protein needed during the final step in the assembly of 30S ribosomal subunit, possibly for assembly of the head region. Essential for efficient processing of 16S rRNA. May be needed both before and after RbfA during the maturation of 16S rRNA. It has affinity for free ribosomal 30S subunits but not for 70S ribosomes. This Pseudomonas fluorescens (strain SBW25) protein is Ribosome maturation factor RimM.